An 895-amino-acid polypeptide reads, in one-letter code: Stonin-2 (895 aa).

Disordered stretches follow at residues 15–119, 145–222, and 234–280; these read WVSF…PPHK, SESS…APPV, and EDNE…KSTL. Positions 64 to 73 are enriched in basic and acidic residues; sequence SHSEQDDSSE. Residues 145 to 193 show a composition bias toward polar residues; that stretch reads SESSWTTHSEDTSSPSVAPSYTDLQLINTEEQASGRASGTDSTDNSSSL. Residues 241 to 251 show a composition bias toward pro residues; that stretch reads PSPPVPSPKKP. The residue at position 253 (Thr-253) is a Phosphothreonine. Ser-278 and Ser-299 each carry phosphoserine. 2 short sequence motifs (NPF) span residues 310–312 and 326–328; these read NPF. The segment at 386–421 is disordered; the sequence is QIDDPDPVGNTALPDDDPTASVELDAPSPASALSQP. Positions 424–557 constitute an SHD domain; that stretch reads GWPMMLRIPE…DLPVLSMDLS (134 aa). The MHD domain maps to 565-872; that stretch reads EEEITVDVRD…AHYSYKVEIE (308 aa). Ser-759 is subject to Phosphoserine.

This sequence belongs to the Stoned B family. Interacts with the second C2 domain of synaptotagmins SYT1 and SYT2. Interacts with EPS15, EPS15R and ITSN1. Interacts indirectly with the AP-2 adapter complex. Interacts with TOR1A and COPS4; the interaction controls STON2 protein stability. In terms of processing, phosphorylated in vitro by PKD. Neddylated; deneddylated via its interaction with the COP9 signalosome (CSN) complex through TOR1A and COPS4. Post-translationally, ubiquitinated; leading to its degradation.

It is found in the cytoplasm. The protein resides in the membrane. Its subcellular location is the synapse. The protein localises to the synaptosome. Its function is as follows. Adapter protein involved in endocytic machinery. Involved in the synaptic vesicle recycling. May facilitate clathrin-coated vesicle uncoating. The protein is Stonin-2 (Ston2) of Mus musculus (Mouse).